We begin with the raw amino-acid sequence, 388 residues long: Tumor protein p53-inducible protein 13 (388 aa).

An N-terminal signal peptide occupies residues 1–27 (MVPPPPPPSRLLLVALVGLLSLHEVVA). The Extracellular segment spans residues 28 to 304 (EPAEEAGTRC…ARGPTPRTEE (277 aa)). The helical transmembrane segment at 305 to 325 (AAWAAMALTFLLVLLTLATLC) threads the bilayer. At 326 to 388 (TRLHRNFRRS…DSGPDSESSD (63 aa)) the chain is on the cytoplasmic side. Positions 361–372 (PSRRIKRSRRRP) are enriched in basic residues. Residues 361 to 388 (PSRRIKRSRRRPLLPPTPDSGPDSESSD) are disordered.

The protein localises to the cell membrane. The protein resides in the cytoplasm. Its function is as follows. May act as a tumor suppressor. Inhibits tumor cell growth, when overexpressed. This Rattus norvegicus (Rat) protein is Tumor protein p53-inducible protein 13 (Tp53i13).